Reading from the N-terminus, the 275-residue chain is MSPRITLNDGNSIPQVGLGVWQTPAEDTERAVAAALQAGYRHIDTAAAYRNETETGRAIANSGVPREDIFLVTKLWNSDQGYDATLAAFDASVQRLGVDYLDLYLIHWPVPENNKFVDTFKAFAHLRDQGRIRSIGVSNFEPEHLTTLIEETGIVPAVNQIELHPLLPQQELRDVHAKLGIATEAWSPLGQGSLLADPVITGIAEQHGKTPAQVLIRWHIQLGNIVIPKSVNPERIASNFDVFDFELSGQDITSIASLETGKRLGPDPRTFNFTG.

The active-site Proton donor is tyrosine 49. NADPH is bound by residues leucine 189, isoleucine 227, lysine 229, serine 230, valine 231, arginine 235, serine 238, and asparagine 239. Lysine 262 is covalently cross-linked (Isoglutamyl lysine isopeptide (Lys-Gln) (interchain with Q-Cter in protein Pup)).

This sequence belongs to the aldo/keto reductase family.

The sequence is that of Aldo-keto reductase MSMEG_2408/MSMEI_2347 from Mycolicibacterium smegmatis (strain ATCC 700084 / mc(2)155) (Mycobacterium smegmatis).